Reading from the N-terminus, the 556-residue chain is 2-succinyl-5-enolpyruvyl-6-hydroxy-3-cyclohexene-1-carboxylate synthase (556 aa).

The protein belongs to the TPP enzyme family. MenD subfamily. As to quaternary structure, homodimer. Mg(2+) is required as a cofactor. The cofactor is Mn(2+). Requires thiamine diphosphate as cofactor.

The enzyme catalyses isochorismate + 2-oxoglutarate + H(+) = 5-enolpyruvoyl-6-hydroxy-2-succinyl-cyclohex-3-ene-1-carboxylate + CO2. Its pathway is quinol/quinone metabolism; 1,4-dihydroxy-2-naphthoate biosynthesis; 1,4-dihydroxy-2-naphthoate from chorismate: step 2/7. It functions in the pathway quinol/quinone metabolism; menaquinone biosynthesis. Catalyzes the thiamine diphosphate-dependent decarboxylation of 2-oxoglutarate and the subsequent addition of the resulting succinic semialdehyde-thiamine pyrophosphate anion to isochorismate to yield 2-succinyl-5-enolpyruvyl-6-hydroxy-3-cyclohexene-1-carboxylate (SEPHCHC). This Shigella boydii serotype 4 (strain Sb227) protein is 2-succinyl-5-enolpyruvyl-6-hydroxy-3-cyclohexene-1-carboxylate synthase.